The following is a 499-amino-acid chain: Chitinase B (499 aa).

A signal peptide spans Met-1–Ala-41. The 384-residue stretch at Lys-42 to Ala-425 folds into the GH18 domain. Residues Asp-68 to Ala-69 and Gly-95 to Tyr-98 each bind chitin. The active-site Proton donor is Glu-144. Chitin-binding positions include Tyr-145, Met-212–Asp-215, and Trp-403. Positions Leu-438–Leu-498 constitute a Chitin-binding type-3 domain.

The protein belongs to the glycosyl hydrolase 18 family. Chitinase class II subfamily.

It carries out the reaction Random endo-hydrolysis of N-acetyl-beta-D-glucosaminide (1-&gt;4)-beta-linkages in chitin and chitodextrins.. This is Chitinase B (chiB) from Serratia marcescens.